Here is a 588-residue protein sequence, read N- to C-terminus: Protein gamma response 1 (588 aa).

Coiled coils occupy residues 64-104 (AACD…LGKT) and 164-281 (SEVK…KTVV). Basic and acidic residues-rich tracts occupy residues 377–389 (KHSE…DKVR), 465–484 (NVKR…KKDD), and 508–525 (TSKK…KAER). Disordered stretches follow at residues 377 to 398 (KHSE…SGNN) and 417 to 525 (PIVR…KAER).

Basal levels in mitotically dividing cells (meristems), and high levels in endoreduplicating cells (stipules, trichomes) (at protein level).

Its subcellular location is the nucleus. In terms of biological role, seems to mediate cell cycle arrest before mitosis in response to DNA damage. Is probably also involved in the transition from mitosis to endoreduplication. This chain is Protein gamma response 1 (GR1), found in Arabidopsis thaliana (Mouse-ear cress).